The following is a 329-amino-acid chain: tRNA-modifying protein YgfZ (329 aa).

Residues W28 and W188 each contribute to the folate site.

This sequence belongs to the tRNA-modifying YgfZ family.

It localises to the cytoplasm. In terms of biological role, folate-binding protein involved in regulating the level of ATP-DnaA and in the modification of some tRNAs. It is probably a key factor in regulatory networks that act via tRNA modification, such as initiation of chromosomal replication. The chain is tRNA-modifying protein YgfZ from Photorhabdus laumondii subsp. laumondii (strain DSM 15139 / CIP 105565 / TT01) (Photorhabdus luminescens subsp. laumondii).